The sequence spans 712 residues: Ribosomal RNA large subunit methyltransferase K/L (712 aa).

The THUMP domain maps to 46-157 (GAYQALLHSR…RENMVVSLDL (112 aa)).

This sequence belongs to the methyltransferase superfamily. RlmKL family.

It localises to the cytoplasm. It carries out the reaction guanosine(2445) in 23S rRNA + S-adenosyl-L-methionine = N(2)-methylguanosine(2445) in 23S rRNA + S-adenosyl-L-homocysteine + H(+). It catalyses the reaction guanosine(2069) in 23S rRNA + S-adenosyl-L-methionine = N(2)-methylguanosine(2069) in 23S rRNA + S-adenosyl-L-homocysteine + H(+). Functionally, specifically methylates the guanine in position 2445 (m2G2445) and the guanine in position 2069 (m7G2069) of 23S rRNA. The chain is Ribosomal RNA large subunit methyltransferase K/L from Actinobacillus pleuropneumoniae serotype 3 (strain JL03).